The sequence spans 208 residues: PITH domain-containing protein ZK353.9 (208 aa).

The PITH domain occupies 17–189; it reads EVPGDDVYRY…RIAIATYESR (173 aa).

Belongs to the PITHD1 family.

This is PITH domain-containing protein ZK353.9 from Caenorhabditis elegans.